Consider the following 135-residue polypeptide: Ribosome-binding factor A (135 aa).

It belongs to the RbfA family. As to quaternary structure, monomer. Binds 30S ribosomal subunits, but not 50S ribosomal subunits or 70S ribosomes.

It localises to the cytoplasm. Its function is as follows. One of several proteins that assist in the late maturation steps of the functional core of the 30S ribosomal subunit. Associates with free 30S ribosomal subunits (but not with 30S subunits that are part of 70S ribosomes or polysomes). Required for efficient processing of 16S rRNA. May interact with the 5'-terminal helix region of 16S rRNA. In Dinoroseobacter shibae (strain DSM 16493 / NCIMB 14021 / DFL 12), this protein is Ribosome-binding factor A.